Reading from the N-terminus, the 55-residue chain is Hirustasin (55 aa).

Disulfide bonds link Cys-6/Cys-17, Cys-11/Cys-22, Cys-24/Cys-44, Cys-29/Cys-48, and Cys-33/Cys-50. One can recognise an Antistasin-like domain in the interval 24–50 (CNEVHCRIRCKYGLKKDENGCEYPCSC).

This sequence belongs to the protease inhibitor I15 (antistasin) family.

The protein localises to the secreted. In terms of biological role, acts as an inhibitor of tissue kallikrein, trypsin, chymotrypsin and neutrophil cathepsin G. This is Hirustasin from Hirudo medicinalis (Medicinal leech).